The chain runs to 247 residues: MEGAEEKKKVPAVPETLKKKRRNFAELKIKRLRKKFAQKMLRKARRKLIYEKAKHYHKEYRQMYRTEIRMARMARKAGNFYVPAEPKLAFVIRIRGINGVSPKVRKVLQLLRLRQIFNGTFVKLNKASINMLRIVEPYIAWGYPNLKSVNELIYKRGYGKINKKRIALTDNALIARSLGKYGIICMEDLIHEICTVGKRFKEANNFLWPFKLSSPRGGMKKKTTHFVEGGDAGNREDQINRLIRRMN.

Residue Met-1 is modified to N-acetylmethionine. Repeat copies occupy residues 7-17 (KKKVPAVPETL), 18-29 (KKKRRNFAELKI), 30-41 (KRLRKKFAQKML), and 42-53 (RKARRKLIYEKA). The 4 X 12 AA tandem repeats stretch occupies residues 7-53 (KKKVPAVPETLKKKRRNFAELKIKRLRKKFAQKMLRKARRKLIYEKA). At Thr-16 the chain carries Phosphothreonine. An N6-acetyllysine modification is found at Lys-123. An N6-succinyllysine modification is found at Lys-126. At Tyr-138 the chain carries Phosphotyrosine.

The protein belongs to the universal ribosomal protein uL30 family. As to quaternary structure, component of the large ribosomal subunit. Homodimer. Interacts with DHX33.

Its subcellular location is the cytoplasm. In terms of biological role, component of the large ribosomal subunit. The ribosome is a large ribonucleoprotein complex responsible for the synthesis of proteins in the cell. Binds to G-rich structures in 28S rRNA and in mRNAs. Plays a regulatory role in the translation apparatus; inhibits cell-free translation of mRNAs. The chain is Large ribosomal subunit protein uL30 (RPL7) from Macaca fascicularis (Crab-eating macaque).